The sequence spans 75 residues: U6-lycotoxin-Ls1d (75 aa).

Positions 1-21 (MKLLLFTALVLVVISLIEVEA) are cleaved as a signal peptide. The propeptide occupies 22–25 (ENER).

The protein belongs to the neurotoxin 19 (CSTX) family. 06 (U6-Lctx) subfamily. In terms of processing, contains 4 disulfide bonds. As to expression, expressed by the venom gland.

It localises to the secreted. The polypeptide is U6-lycotoxin-Ls1d (Lycosa singoriensis (Wolf spider)).